Here is a 197-residue protein sequence, read N- to C-terminus: Chaperone protein dnaJ 20, chloroplastic (197 aa).

A chloroplast-targeting transit peptide spans 1 to 60; the sequence is MKCYKSSSILSTNHHPFFYKQQPISSLQPTSIPTTISYPTRTRFSSTRIQSRLTHDDPVK. One can recognise a J domain in the interval 66–133; that stretch reads SFYDLLGVTE…RRRVLYDRDL (68 aa). Residues 169-197 are disordered; sequence SGLRRRSNQKDNNTMSWAARMRRQQQESS.

It belongs to the DnaJ family. C/III subfamily. Light-grown seedlings.

Its subcellular location is the plastid. It localises to the chloroplast. Functionally, plays a continuous role in plant development probably in the structural organization of compartments. In Arabidopsis thaliana (Mouse-ear cress), this protein is Chaperone protein dnaJ 20, chloroplastic (ATJ20).